A 338-amino-acid chain; its full sequence is Protein FosB (338 aa).

Disordered stretches follow at residues 1–54 (MFQA…PGSF) and 80–162 (AQSQ…RVRR). A compositionally biased stretch (polar residues) spans 13 to 31 (SRCSSSPSAESQYLSSVDS). Ser27 is subject to Phosphoserine. Over residues 113–124 (SSGGASGSGGPS) the composition is skewed to gly residues. The segment covering 125-137 (TSGTTSGPGPARP) has biased composition (low complexity). The region spanning 155-218 (EEKRRVRRER…ERLEFVLVAH (64 aa)) is the bZIP domain. The tract at residues 157–182 (KRRVRRERNKLAAAKCRNRRRELTDR) is basic motif. The leucine-zipper stretch occupies residues 183–211 (LQAETDQLEEEKAELESEIAELQKEKERL). 2 disordered regions span residues 222-271 (CKIP…TSQD) and 315-338 (AGTQ…LLAL). Over residues 256–265 (LPPPPAPPLP) the composition is skewed to pro residues. The span at 318–338 (QRPSGSDQPTDPLNSPSLLAL) shows a compositional bias: polar residues.

The protein belongs to the bZIP family. Fos subfamily. In terms of assembly, heterodimer; binds to DNA as heterodimer. Component of an AP-1 transcription factor complex; composed of FOS-JUN heterodimers. As part of the AP-1 transcription factor complex, forms heterodimers with JUN, JUNB or JUND, thereby binding to the AP-1 consensus sequence and stimulating transcription. Interacts with the BAF multiprotein chromatin-remodeling complex subunits SMARCB1 and SMARCD1. Interacts with ARID1A and JUN. Post-translationally, phosphorylated.

Its subcellular location is the nucleus. In terms of biological role, heterodimerizes with proteins of the JUN family to form an AP-1 transcription factor complex, thereby enhancing their DNA binding activity to an AP-1 consensus sequence 5'-TGA[GC]TCA-3' and enhancing their transcriptional activity. Exhibits transactivation activity in vitro. As part of the AP-1 complex, facilitates enhancer selection together with cell-type-specific transcription factors by collaboratively binding to nucleosomal enhancers and recruiting the SWI/SNF (BAF) chromatin remodeling complex to establish accessible chromatin. Together with JUN, plays a role in activation-induced cell death of T cells by binding to the AP-1 promoter site of FASLG/CD95L, and inducing its transcription in response to activation of the TCR/CD3 signaling pathway. Involved in the display of nurturing behavior towards newborns. May play a role in neurogenesis in the hippocampus and in learning and memory-related tasks by regulating the expression of various genes involved in neurogenesis, depression and epilepsy. Implicated in behavioral responses related to morphine reward and spatial memory. This Canis lupus familiaris (Dog) protein is Protein FosB (FOSB).